Here is a 632-residue protein sequence, read N- to C-terminus: Probable potassium transport system protein Kup (632 aa).

12 consecutive transmembrane segments (helical) span residues 20 to 40 (LLVA…LYTL), 60 to 80 (ILSL…VMFI), 111 to 131 (LMVI…MITP), 146 to 166 (FDGI…ALFL), 178 to 198 (LFGP…VHGI), 216 to 236 (FFIV…LALT), 257 to 277 (WFAL…AILL), 289 to 309 (LLAP…ATVI), 347 to 367 (IYIA…VIGF), 379 to 399 (VAVT…MLLL), 404 to 424 (PVLA…FFAA), and 429 to 449 (IVQG…LMST).

It belongs to the HAK/KUP transporter (TC 2.A.72) family.

The protein localises to the cell inner membrane. The enzyme catalyses K(+)(in) + H(+)(in) = K(+)(out) + H(+)(out). In terms of biological role, transport of potassium into the cell. Likely operates as a K(+):H(+) symporter. The sequence is that of Probable potassium transport system protein Kup from Pseudomonas putida (strain W619).